The primary structure comprises 508 residues: GTPase Obg (508 aa).

The Obg domain occupies 2–159; it reads ARFVDRVVLH…HDVILELKSM (158 aa). Residues 160 to 341 enclose the OBG-type G domain; the sequence is ADIGLVGFPS…LKYAMLDLVQ (182 aa). GTP-binding positions include 166–173, 191–195, 212–215, 292–295, and 322–324; these read GFPSAGKS, FTTLQ, DVPG, NKAD, and SAV. Mg(2+) is bound by residues S173 and T193. Residues 364 to 444 enclose the OCT domain; that stretch reads DARKKNKDFE…IGEVSFEWEP (81 aa).

This sequence belongs to the TRAFAC class OBG-HflX-like GTPase superfamily. OBG GTPase family. In terms of assembly, monomer. Mg(2+) is required as a cofactor.

It is found in the cytoplasm. Functionally, an essential GTPase which binds GTP, GDP and possibly (p)ppGpp with moderate affinity, with high nucleotide exchange rates and a fairly low GTP hydrolysis rate. Plays a role in control of the cell cycle, stress response, ribosome biogenesis and in those bacteria that undergo differentiation, in morphogenesis control. The polypeptide is GTPase Obg (Corynebacterium diphtheriae (strain ATCC 700971 / NCTC 13129 / Biotype gravis)).